We begin with the raw amino-acid sequence, 287 residues long: Elongation factor Ts (287 aa).

Residues 80–83 (TDFL) are involved in Mg(2+) ion dislocation from EF-Tu.

Belongs to the EF-Ts family.

Its subcellular location is the cytoplasm. Its function is as follows. Associates with the EF-Tu.GDP complex and induces the exchange of GDP to GTP. It remains bound to the aminoacyl-tRNA.EF-Tu.GTP complex up to the GTP hydrolysis stage on the ribosome. This Pseudomonas syringae pv. syringae (strain B728a) protein is Elongation factor Ts.